The primary structure comprises 572 residues: Putative carbohydrate transport ATP-binding protein MPN_258 (572 aa).

2 ABC transporter domains span residues 6–253 (FRME…MGKE) and 327–572 (RFIR…LIMQ). 40 to 47 (GENGAGKS) is an ATP binding site.

It belongs to the ABC transporter superfamily.

The protein localises to the cell membrane. In terms of biological role, part of the ABC transporter complex involved in carbohydrates import. Probably responsible for energy coupling to the transport system. The chain is Putative carbohydrate transport ATP-binding protein MPN_258 from Mycoplasma pneumoniae (strain ATCC 29342 / M129 / Subtype 1) (Mycoplasmoides pneumoniae).